Reading from the N-terminus, the 125-residue chain is MSIETLVEEIGKLTLTEASELVKALEEKFGVSAAPAMMAGVMAAAPAGDAPAQEEKTEFDVVLTAAGESKINVIKVVRALTGLGLKEAKDLVDGAPKTVKEGISKDEAEKVAKELKDVGASVELK.

The protein belongs to the bacterial ribosomal protein bL12 family. As to quaternary structure, homodimer. Part of the ribosomal stalk of the 50S ribosomal subunit. Forms a multimeric L10(L12)X complex, where L10 forms an elongated spine to which 2 to 4 L12 dimers bind in a sequential fashion. Binds GTP-bound translation factors.

In terms of biological role, forms part of the ribosomal stalk which helps the ribosome interact with GTP-bound translation factors. Is thus essential for accurate translation. This chain is Large ribosomal subunit protein bL12, found in Chlorobium phaeobacteroides (strain DSM 266 / SMG 266 / 2430).